We begin with the raw amino-acid sequence, 209 residues long: Glutathione S-transferase 1-1 (209 aa).

The GST N-terminal domain maps to methionine 1–aspartate 81. Glutathione is bound by residues histidine 51 to isoleucine 53 and glutamate 65 to arginine 67. The region spanning cysteine 87 to glutamate 209 is the GST C-terminal domain.

Belongs to the GST superfamily. Theta family. As to quaternary structure, homodimer.

The catalysed reaction is RX + glutathione = an S-substituted glutathione + a halide anion + H(+). Conjugation of reduced glutathione to a wide number of exogenous and endogenous hydrophobic electrophiles. The chain is Glutathione S-transferase 1-1 (GstD1) from Drosophila yakuba (Fruit fly).